Consider the following 80-residue polypeptide: MKLTCVLIVVVLFLTACQLITTDDSTGKQRYQAWKLRSKMQNSVLSRLSKRCDEEGTGCSSDSECCSGRCTPEGLFEFCE.

The first 22 residues, Met-1 to Thr-22, serve as a signal peptide directing secretion. Positions Asp-23–Ser-49 are excised as a propeptide. Cystine bridges form between Cys-52–Cys-66, Cys-59–Cys-70, and Cys-65–Cys-79.

Belongs to the conotoxin O1 superfamily. Peptide predicted to begin at Arg-51, but it seems more probable that it begins at Cys-52, since this position corresponds to a dibasic residue cleavage. As to expression, expressed by the venom duct.

It localises to the secreted. Its function is as follows. Omega-conotoxins act at presynaptic membranes, they bind and block voltage-gated calcium channels (Cav). This is Omega-conotoxin-like 1 from Conus capitaneus (Captain cone).